Here is a 154-residue protein sequence, read N- to C-terminus: Anaerobic ribonucleoside-triphosphate reductase-activating protein (154 aa).

Residues C26, C30, and C33 each coordinate [4Fe-4S] cluster. Residues 32–34 (GCY) and G74 each bind S-adenosyl-L-methionine.

This sequence belongs to the organic radical-activating enzymes family. As to quaternary structure, forms a tetramer composed of two NrdD and two NrdG subunits. [4Fe-4S] cluster is required as a cofactor.

Its subcellular location is the cytoplasm. It catalyses the reaction glycyl-[protein] + reduced [flavodoxin] + S-adenosyl-L-methionine = glycin-2-yl radical-[protein] + semiquinone [flavodoxin] + 5'-deoxyadenosine + L-methionine + H(+). Activation of anaerobic ribonucleoside-triphosphate reductase under anaerobic conditions by generation of an organic free radical, using S-adenosylmethionine and reduced flavodoxin as cosubstrates to produce 5'-deoxy-adenosine. This is Anaerobic ribonucleoside-triphosphate reductase-activating protein (nrdG) from Escherichia coli O157:H7.